Reading from the N-terminus, the 491-residue chain is Cytosolic Fe-S cluster assembly factor NAR1 (491 aa).

[4Fe-4S] cluster is bound by residues Cys-20, Cys-65, Cys-68, Cys-71, Cys-177, Cys-232, Cys-414, and Cys-418.

It belongs to the NARF family.

Its function is as follows. Component of the cytosolic Fe/S protein assembly machinery. Required for maturation of extramitochondrial Fe/S proteins. May play a role in the transfer of pre-assembled Fe/S clusters to target apoproteins. This is Cytosolic Fe-S cluster assembly factor NAR1 (NAR1) from Yarrowia lipolytica (strain CLIB 122 / E 150) (Yeast).